We begin with the raw amino-acid sequence, 62 residues long: uncharacterized protein (62 aa).

Residues 17-37 form a helical membrane-spanning segment; it reads IVFFLGLVVVLLMMINLYMLI.

The protein localises to the membrane. This is an uncharacterized protein from Helicobacter pylori (strain J99 / ATCC 700824) (Campylobacter pylori J99).